The primary structure comprises 630 residues: Biosynthetic arginine decarboxylase (630 aa).

Residue lysine 99 is modified to N6-(pyridoxal phosphate)lysine. 279-289 (FDVGGGLGVDY) lines the substrate pocket.

Belongs to the Orn/Lys/Arg decarboxylase class-II family. SpeA subfamily. Mg(2+) is required as a cofactor. It depends on pyridoxal 5'-phosphate as a cofactor.

It catalyses the reaction L-arginine + H(+) = agmatine + CO2. It functions in the pathway amine and polyamine biosynthesis; agmatine biosynthesis; agmatine from L-arginine: step 1/1. In terms of biological role, catalyzes the biosynthesis of agmatine from arginine. This chain is Biosynthetic arginine decarboxylase, found in Neisseria meningitidis serogroup B (strain ATCC BAA-335 / MC58).